A 94-amino-acid polypeptide reads, in one-letter code: Large ribosomal subunit protein bL27 (94 aa).

Positions 1–9 (MLRLDLQFF) are excised as a propeptide.

Belongs to the bacterial ribosomal protein bL27 family. Post-translationally, the N-terminus is cleaved by ribosomal processing cysteine protease Prp.

The chain is Large ribosomal subunit protein bL27 from Bacillus pumilus (strain SAFR-032).